Consider the following 215-residue polypeptide: 3-demethoxyubiquinol 3-hydroxylase (215 aa).

Residues Glu-64, Glu-94, His-97, Glu-146, Glu-178, and His-181 each contribute to the Fe cation site.

The protein belongs to the COQ7 family. Requires Fe cation as cofactor.

It localises to the cell membrane. It catalyses the reaction a 5-methoxy-2-methyl-3-(all-trans-polyprenyl)benzene-1,4-diol + AH2 + O2 = a 3-demethylubiquinol + A + H2O. It functions in the pathway cofactor biosynthesis; ubiquinone biosynthesis. Its function is as follows. Catalyzes the hydroxylation of 2-nonaprenyl-3-methyl-6-methoxy-1,4-benzoquinol during ubiquinone biosynthesis. The sequence is that of 3-demethoxyubiquinol 3-hydroxylase from Stutzerimonas stutzeri (strain A1501) (Pseudomonas stutzeri).